Here is a 541-residue protein sequence, read N- to C-terminus: Zinc finger protein 513 (541 aa).

Residues 1–118 form a disordered region; it reads MPRRKQSHPQ…GEARGERPGP (118 aa). The span at 44 to 55 shows a compositional bias: acidic residues; sequence LEFEEEEEEDEG. Phosphoserine occurs at positions 85 and 96. Basic and acidic residues predominate over residues 103-115; it reads EPARGPGEARGER. 8 C2H2-type zinc fingers span residues 150 to 172, 178 to 200, 206 to 228, 360 to 382, 388 to 410, 416 to 438, 444 to 466, and 472 to 494; these read YSCR…MQTH, FRCG…TRTH, YRCP…QRTH, FACS…MKTH, FRCA…QRVH, YKCP…GRIH, FRCS…MLRH, and FRCA…QKVH. Positions 492 to 541 are disordered; the sequence is KVHGHGGAGGPGLSAPEGWAPPHSPPSVLSTRGPAALGATGSRALHSDSP.

Belongs to the krueppel C2H2-type zinc-finger protein family. In terms of assembly, binds DNA. Can associate with the proximal promoter regions of PAX6 and SP4, and their known targets including ARR3, RHO, OPN1MW2 and OPN1SW. Widely expressed. In the eye, expression is greatest in the retina and least in the lens and cornea.

The protein resides in the nucleus. Its function is as follows. Transcriptional regulator that plays a role in retinal development and maintenance. This is Zinc finger protein 513 (Znf513) from Mus musculus (Mouse).